The sequence spans 186 residues: ADP-ribosylation factor-like protein 8A (186 aa).

Residues 1–19 constitute an intramembrane region (note=Mediates targeting to membranes); it reads MLALFNKLLDWFRALFWKE. Residues 29–35, 71–75, and 130–133 each bind GTP; these read QYSGKTT, DIGGQ, and NKRD.

It belongs to the small GTPase superfamily. Arf family.

Its subcellular location is the late endosome membrane. It is found in the lysosome membrane. It localises to the cytoplasm. The protein resides in the cytoskeleton. The protein localises to the spindle. Its subcellular location is the cell projection. It is found in the axon. It localises to the synapse. In terms of biological role, plays a role in lysosome motility. In neurons, mediates the anterograde axonal long-range transport of presynaptic lysosome-related vesicles required for presynaptic biogenesis and synaptic function. May play a role in chromosome segregation. The protein is ADP-ribosylation factor-like protein 8A (ARL8A) of Gallus gallus (Chicken).